The sequence spans 185 residues: Ribosome-recycling factor (185 aa).

This sequence belongs to the RRF family.

It localises to the cytoplasm. Functionally, responsible for the release of ribosomes from messenger RNA at the termination of protein biosynthesis. May increase the efficiency of translation by recycling ribosomes from one round of translation to another. This Streptococcus pneumoniae serotype 19F (strain G54) protein is Ribosome-recycling factor.